A 753-amino-acid polypeptide reads, in one-letter code: Centromere protein I (753 aa).

The segment covering 1-15 (MQRRQSSKHSKRPLQ) has biased composition (basic residues). Residues 1 to 54 (MQRRQSSKHSKRPLQVHHSNQTDLSAWRKGGTVDTEKSAQNRQSLSDQKNDNEQ) form a disordered region.

Belongs to the CENP-I/CTF3 family. As to quaternary structure, component of the CENPA-HI complex, at least composed of CENPH, CENPI, CENPK, CENPL, CENPM, CENPO and CENPP.

It localises to the nucleus. The protein localises to the chromosome. It is found in the centromere. In terms of biological role, component of the CENPA-HI complex, a centromeric complex involved in assembly of kinetochore proteins, mitotic progression and chromosome segregation. Required for the localization of CENPC but not CENPA to the centromere. It however may be involved in incorporation of newly synthesized CENPA into centromeres via its interaction with the CENPA-NAC complex. This chain is Centromere protein I (CENPI), found in Gallus gallus (Chicken).